A 280-amino-acid chain; its full sequence is Threonylcarbamoyl-AMP synthase (280 aa).

A mitochondrion-targeting transit peptide spans Met-1 to Ala-56. The residue at position 61 (Ser-61) is a Phosphoserine. The 191-residue stretch at Thr-68–Ala-258 folds into the YrdC-like domain.

The protein belongs to the SUA5 family. As to quaternary structure, interacts with RSC1A1.

The protein localises to the cytoplasm. Its subcellular location is the mitochondrion. It is found in the cell membrane. It carries out the reaction L-threonine + hydrogencarbonate + ATP = L-threonylcarbamoyladenylate + diphosphate + H2O. Functionally, cytoplasmic and mitochondrial threonylcarbamoyl-AMP synthase required for the formation of a threonylcarbamoyl group on adenosine at position 37 (t(6)A37) in tRNAs that read codons beginning with adenine. Catalyzes the conversion of L-threonine, HCO(3)(-)/CO(2) and ATP to give threonylcarbamoyl-AMP (TC-AMP) as the acyladenylate intermediate, with the release of diphosphate. Participates in t(6)A37 formation in cytoplasmic and mitochondrial tRNAs. May regulate the activity of some transporters. This is Threonylcarbamoyl-AMP synthase from Rattus norvegicus (Rat).